We begin with the raw amino-acid sequence, 239 residues long: Aspartate/glutamate leucyltransferase (239 aa).

This sequence belongs to the R-transferase family. Bpt subfamily.

The protein resides in the cytoplasm. It carries out the reaction N-terminal L-glutamyl-[protein] + L-leucyl-tRNA(Leu) = N-terminal L-leucyl-L-glutamyl-[protein] + tRNA(Leu) + H(+). It catalyses the reaction N-terminal L-aspartyl-[protein] + L-leucyl-tRNA(Leu) = N-terminal L-leucyl-L-aspartyl-[protein] + tRNA(Leu) + H(+). In terms of biological role, functions in the N-end rule pathway of protein degradation where it conjugates Leu from its aminoacyl-tRNA to the N-termini of proteins containing an N-terminal aspartate or glutamate. In Campylobacter jejuni (strain RM1221), this protein is Aspartate/glutamate leucyltransferase.